We begin with the raw amino-acid sequence, 950 residues long: Nonsense-mediated mRNA decay factor SMG8 (950 aa).

Disordered stretches follow at residues 560 to 607 and 624 to 651; these read HTGK…LSPT and NESQASSEQLSNSEQNSTSSGTSSADTE. Positions 568 to 582 are enriched in acidic residues; that stretch reads QDEDGEEDAEDEEGQ. The span at 593 to 607 shows a compositional bias: polar residues; it reads QNTASNGCSQPLSPT. Over residues 624–648 the composition is skewed to low complexity; sequence NESQASSEQLSNSEQNSTSSGTSSA.

Belongs to the SMG8 family.

Its function is as follows. Involved in nonsense-mediated decay (NMD) of mRNAs containing premature stop codons. Probable component of kinase complex containing nonC and recruited to stalled ribosomes. In Drosophila yakuba (Fruit fly), this protein is Nonsense-mediated mRNA decay factor SMG8.